The following is a 306-amino-acid chain: MGCDGGTIPKRHELVKGPKKVEKVDKDAELVAQWNYCTLSQEILRRPIVACELGRLYNKDAVIEFLLDKSAEKALGKAASHIKSIKNVTELKLSDNPAWEGDKGNTKGDKHDDLQRARFICPVVGLEMNGRHRFCFLRCCGCVFSERALKEIKAEVCHTCGAAFQEDDVIVLNGTKEDVDVLKTRMEERRLRAKLEKKTKKPKAAESVSKPDVSEEAPGPSKVKTGKPEEASLDSREKKTNLAPKSTATNESSSGKAGKPPCGATKRSIADSEESEAYKSLFTTHSSAKRSKEESAHWVTHTSYCF.

Residues 193-306 (AKLEKKTKKP…HWVTHTSYCF (114 aa)) form a disordered region. Over residues 226–240 (GKPEEASLDSREKKT) the composition is skewed to basic and acidic residues. The span at 243-255 (APKSTATNESSSG) shows a compositional bias: polar residues. S287 carries the post-translational modification Phosphoserine.

Belongs to the rtf2 family. As to quaternary structure, interacts with DDI2; probably also interacts with DDI1. Post-translationally, undergoes proteasomal degradation, via DDI1 and DDI2. Removal from stalled replisomes and degradation are required for genome stability.

The protein resides in the chromosome. Its function is as follows. Replication termination factor which is a component of the elongating replisome. Required for ATR pathway signaling upon DNA damage and has a positive activity during DNA replication. Might function to facilitate fork pausing at replication fork barriers like the rDNA. May be globally required to stimulate ATR signaling after the fork stalls or encounters a lesion. Interacts with nascent DNA. The sequence is that of Replication termination factor 2 (RTF2) from Pongo abelii (Sumatran orangutan).